Consider the following 259-residue polypeptide: Probable metal transport system ATP-binding protein CT_068 (259 aa).

Positions 9 to 241 (WSVEDLCVNY…AIFQAYGCEL (233 aa)) constitute an ABC transporter domain. 41–48 (GPNGAGKS) contacts ATP.

Belongs to the ABC transporter superfamily.

Its subcellular location is the cell inner membrane. Part of an ATP-driven transport system CT_067/CT_068/CT_069/CT_070 for a metal. Probably responsible for energy coupling to the transport system. The polypeptide is Probable metal transport system ATP-binding protein CT_068 (Chlamydia trachomatis serovar D (strain ATCC VR-885 / DSM 19411 / UW-3/Cx)).